The chain runs to 116 residues: Cysteine proteinase inhibitor 1 (116 aa).

The signal sequence occupies residues 1 to 22; sequence MVPKPLSLLLLLLLALSAAVVG. A Cystatin domain is found at 30-89; it reads GGWRPIENLNSAEVQDVAQFAVSEHNKQANDELQYQSVVRGYTQVVAGTNYRLVIAAKDG. Positions 73 to 77 match the Secondary area of contact motif; sequence QVVAG. The N-linked (GlcNAc...) asparagine glycan is linked to Asn109.

Belongs to the cystatin family. Phytocystatin subfamily.

It localises to the secreted. Specific inhibitor of papain family cysteine proteinases. This is Cysteine proteinase inhibitor 1 from Actinidia chinensis var. chinensis (Chinese soft-hair kiwi).